A 614-amino-acid chain; its full sequence is Sodium- and chloride-dependent betaine transporter (614 aa).

The tract at residues M1 to V33 is disordered. The Cytoplasmic portion of the chain corresponds to M1–E44. The segment covering E21–V33 has biased composition (basic and acidic residues). A run of 3 helical transmembrane segments spans residues F45–L65, A73–L92, and G117–L137. The Extracellular segment spans residues A138–R210. A disulfide bridge links C157 with C166. N-linked (GlcNAc...) asparagine glycosylation is found at N171 and N183. 9 consecutive transmembrane segments (helical) span residues W211–W229, V238–I255, I291–Y308, I320–L341, M374–L393, L423–T441, G458–A478, I499–S518, and I538–I556. Over T557–L614 the chain is Cytoplasmic. The interval G591–L614 is disordered.

It belongs to the sodium:neurotransmitter symporter (SNF) (TC 2.A.22) family. SLC6A12 subfamily. As to quaternary structure, interacts with LIN7C. As to expression, kidney.

It is found in the basolateral cell membrane. The protein localises to the cell membrane. It catalyses the reaction 4-aminobutanoate(out) + chloride(out) + 3 Na(+)(out) = 4-aminobutanoate(in) + chloride(in) + 3 Na(+)(in). The catalysed reaction is glycine betaine(out) + 2 chloride(out) + 3 Na(+)(out) = glycine betaine(in) + 2 chloride(in) + 3 Na(+)(in). Its function is as follows. Transporter that mediates cellular uptake of betaine and GABA in a sodium- and chloride-dependent process. May have a role in regulation of GABAergic transmission in the brain through the reuptake of GABA into presynaptic terminals, as well as in osmotic regulation. Probably also involved in renal and hepatic osmotic regulation. The sequence is that of Sodium- and chloride-dependent betaine transporter (SLC6A12) from Canis lupus familiaris (Dog).